A 117-amino-acid polypeptide reads, in one-letter code: Large ribosomal subunit protein bL20 (117 aa).

The protein belongs to the bacterial ribosomal protein bL20 family.

Its function is as follows. Binds directly to 23S ribosomal RNA and is necessary for the in vitro assembly process of the 50S ribosomal subunit. It is not involved in the protein synthesizing functions of that subunit. This is Large ribosomal subunit protein bL20 from Nitratidesulfovibrio vulgaris (strain DSM 19637 / Miyazaki F) (Desulfovibrio vulgaris).